Consider the following 822-residue polypeptide: ATP-dependent zinc metalloprotease FTSH 8, mitochondrial (822 aa).

The segment covering 1–25 (MSLASLARALSRRSAPSSSRARQGF) has biased composition (low complexity). Disordered stretches follow at residues 1–50 (MSLA…LHGG), 103–131 (NYYP…STDD), and 202–221 (SSPQ…TTND). The N-terminal 93 residues, 1–93 (MSLASLARAL…LANPQFRRLF (93 aa)), are a transit peptide targeting the mitochondrion. Basic and acidic residues predominate over residues 108–127 (GKKEAPKGDGSNKSDSKQDS). 375–382 (GPPGTGKT) provides a ligand contact to ATP. H600 contacts Zn(2+). Residue E601 is part of the active site. Zn(2+) contacts are provided by H604 and D676. A disordered region spans residues 781 to 822 (PTNYDLFKQGFQDEEDSKNQEAAKTPQPDDDGTPSLGEVVPT).

It in the N-terminal section; belongs to the AAA ATPase family. This sequence in the C-terminal section; belongs to the peptidase M41 family. It depends on Zn(2+) as a cofactor.

Its subcellular location is the mitochondrion. Probable ATP-dependent zinc metallopeptidase. The chain is ATP-dependent zinc metalloprotease FTSH 8, mitochondrial (FTSH8) from Oryza sativa subsp. japonica (Rice).